The chain runs to 490 residues: Thyroid hormone receptor alpha (490 aa).

The segment at 1–32 (MEQKPSKVECGSDPEENSARSPDGKRKRKNGQ) is disordered. The tract at residues 1–52 (MEQKPSKVECGSDPEENSARSPDGKRKRKNGQCSLKTSMSGYIPSYLDKDEQ) is modulating. Positions 53, 56, 70, 73, 91, 97, 107, and 110 each coordinate Zn(2+). 2 NR C4-type zinc fingers span residues 53 to 73 (CVVC…CEGC) and 91 to 115 (CKYD…FKKC). The segment at residues 53 to 127 (CVVCGDKATG…VGMAMDLVLD (75 aa)) is a DNA-binding region (nuclear receptor). The region spanning 163 to 407 (EEWDLIHIAT…EGQQLLGMHV (245 aa)) is the NR LBD domain. The 3,3',5-triiodo-L-thyronine site is built by Arg228 and Ser277. A disordered region spans residues 457–490 (AVCGEDDSSEADSPSSSEEEPEVCEDLAGNAASP).

Belongs to the nuclear hormone receptor family. NR1 subfamily. In terms of assembly, binds DNA as a dimer; homodimer and heterodimer with RXRB. Interacts with NCOA3 and NCOA6 coactivators, leading to a strong increase of transcription of target genes. Probably interacts with SFPQ. Interacts with C1D. Interacts with AKAP13. Interacts with TP53INP2. Interacts with PER2. Isoform alpha-2 and isoform alpha-1 interact with TACC1, but the interaction with alpha-1 is weaker. The interaction with isoform alpha-1, but not alpha-2, is decreased in the presence of thyroid hormone T3.

It is found in the nucleus. It localises to the cytoplasm. Its function is as follows. Nuclear hormone receptor that can act as a repressor or activator of transcription. High affinity receptor for thyroid hormones, including triiodothyronine and thyroxine. Functionally, does not bind thyroid hormone and functions as a weak dominant negative inhibitor of thyroid hormone action. The chain is Thyroid hormone receptor alpha (THRA) from Homo sapiens (Human).